A 392-amino-acid polypeptide reads, in one-letter code: MHEVKQPRRIMVVTGEASGDLHGAHLIEAAGKVDPGLSFFGVGGACMAKAGCEILIPGEDLAVMGLVEVLGHFPTIWRAFRKLKKILHGPQRPDALVLIDFAEFNLLLAAQAKKAGVPVLYYVSPQVWAWRRGRVRRIASVVDRLAAIFPFEPELYQGLDIDVEYVGHPLLDEFAITCERDAFLRRLGLDPARQVIGLFPGSRKNELKYIAETILQSAVKLREKHPDAQFLLPVASSFRRQDIEALVAPYGLPVTVVDEPIYDVINACDAVISVSGTVTLQVALVGTPMAIVYKMAPLSFAIGKRLIRVPHIGLANIVAGRGVVKEFIQEDATPAMISREIDAILTDAEYNRSIRGGLATVQQRMGEGGCAARVARMVSELCREIPGKERMV.

Belongs to the LpxB family.

The enzyme catalyses a lipid X + a UDP-2-N,3-O-bis[(3R)-3-hydroxyacyl]-alpha-D-glucosamine = a lipid A disaccharide + UDP + H(+). It functions in the pathway bacterial outer membrane biogenesis; LPS lipid A biosynthesis. Condensation of UDP-2,3-diacylglucosamine and 2,3-diacylglucosamine-1-phosphate to form lipid A disaccharide, a precursor of lipid A, a phosphorylated glycolipid that anchors the lipopolysaccharide to the outer membrane of the cell. This Syntrophotalea carbinolica (strain DSM 2380 / NBRC 103641 / GraBd1) (Pelobacter carbinolicus) protein is Lipid-A-disaccharide synthase.